We begin with the raw amino-acid sequence, 231 residues long: NADH-ubiquinone oxidoreductase chain 4 (231 aa).

The next 6 membrane-spanning stretches (helical) occupy residues 1–21, 34–54, 63–85, 89–111, 128–148, and 156–176; these read PIAG…YGII, MFLP…LTCL, IAYS…TPWG, AMAL…NTTY, ILPM…ATPP, and LLIM…LGLS.

Belongs to the complex I subunit 4 family.

It localises to the mitochondrion membrane. It carries out the reaction a ubiquinone + NADH + 5 H(+)(in) = a ubiquinol + NAD(+) + 4 H(+)(out). In terms of biological role, core subunit of the mitochondrial membrane respiratory chain NADH dehydrogenase (Complex I) that is believed to belong to the minimal assembly required for catalysis. Complex I functions in the transfer of electrons from NADH to the respiratory chain. The immediate electron acceptor for the enzyme is believed to be ubiquinone. The polypeptide is NADH-ubiquinone oxidoreductase chain 4 (MT-ND4) (Bothriechis lateralis (Side-striped palm pitviper)).